Reading from the N-terminus, the 826-residue chain is Zinc phosphodiesterase ELAC protein 2 (826 aa).

The transit peptide at 1–16 directs the protein to the mitochondrion; that stretch reads MWALCSLLRSAAGRTM. Disordered stretches follow at residues 16-51 and 188-231; these read MSQG…PSGC and EQRR…VSQR. Residues 27–38 are compositionally biased toward basic and acidic residues; that stretch reads ARRERPRKDPLR. Phosphoserine occurs at positions 199, 208, 212, 229, 618, and 736. The segment covering 208–224 has biased composition (basic and acidic residues); sequence SPERSSDSESNENEPHL. A disordered region spans residues 798-826; that stretch reads ELAGGLEDGEPQQKRAHTEEPQAKKVRAQ. Residues 808 to 820 are compositionally biased toward basic and acidic residues; the sequence is PQQKRAHTEEPQA.

This sequence belongs to the RNase Z family. As to quaternary structure, homodimer. Interacts with PTCD1. Zn(2+) serves as cofactor. As to expression, widely expressed. Highly expressed in heart, placenta, liver, skeletal muscle, kidney, pancreas, testis and ovary. Weakly expressed in brain, lung, spleen, thymus, prostate, small intestine, colon and leukocytes.

The protein localises to the mitochondrion. It localises to the mitochondrion matrix. The protein resides in the mitochondrion nucleoid. It is found in the nucleus. The catalysed reaction is Endonucleolytic cleavage of RNA, removing extra 3' nucleotides from tRNA precursor, generating 3' termini of tRNAs. A 3'-hydroxy group is left at the tRNA terminus and a 5'-phosphoryl group is left at the trailer molecule.. In terms of biological role, zinc phosphodiesterase, which displays mitochondrial tRNA 3'-processing endonuclease activity. Involved in tRNA maturation, by removing a 3'-trailer from precursor tRNA. Associates with mitochondrial DNA complexes at the nucleoids to initiate RNA processing and ribosome assembly. The polypeptide is Zinc phosphodiesterase ELAC protein 2 (ELAC2) (Homo sapiens (Human)).